The sequence spans 387 residues: MTLDDAALKSFGFIERPTKNMINIDPLQTGGILTEDARRALVEWGDGYSICDNCGGVLDLIKKPPVQKFIHEALPEFLGVDEVRITHGARESKFAVMHAIAQEGDTVILDGLAHYSSVVAAQRARLEIRKVPHSEKPDYHIDPEAYGTAIEETISETGKAPALALLTYPDGNYGNLADAKKIASVCHEYDVPLLLNCAYSVGRMPVDAKELGVDFIAGSGHKSMASCGPIGVLGVNNDNGDYSDIIFRKSPTNKNKEIELLGCTARSATLMTMIASFPEVVKRTRNWGNEVADARWFSEKLETMGLIQMGQKPHNHDLMFFEAPNLYEISTRVKKGRYFLYKELKSRNIHGIKAGLTKFFKLSTFEVGRENLSYIVDSFDEIIKKYE.

Pyridoxal 5'-phosphate contacts are provided by residues 89–90 (AR), Asn196, and 219–221 (SGH). Lys222 is modified (N6-(pyridoxal phosphate)lysine).

It belongs to the SepCysS family. In terms of assembly, homodimer. Interacts with SepRS. Pyridoxal 5'-phosphate serves as cofactor.

It carries out the reaction O-phospho-L-seryl-tRNA(Cys) + hydrogen sulfide + H(+) = L-cysteinyl-tRNA(Cys) + phosphate. In terms of biological role, converts O-phospho-L-seryl-tRNA(Cys) (Sep-tRNA(Cys)) to L-cysteinyl-tRNA(Cys) (Cys-tRNA(Cys)). The sequence is that of O-phospho-L-seryl-tRNA:Cys-tRNA synthase 2 from Methanococcoides burtonii (strain DSM 6242 / NBRC 107633 / OCM 468 / ACE-M).